Reading from the N-terminus, the 349-residue chain is UPF0324 inner membrane protein YeiH (349 aa).

At 1–12 (MTNITLQKQHRT) the chain is on the periplasmic side. Residues 13-32 (LWHFIPGLALSAVITGVALW) traverse the membrane as a helical segment. At 33 to 35 (GGS) the chain is on the cytoplasmic side. Residues 36-58 (IPAVAGAGFSALTLAILLGMVLG) traverse the membrane as a helical segment. Residues 59 to 99 (NTIYPHIWKSCDGGVLFAKQYLLRLGIILYGFRLTFSQIAD) are Periplasmic-facing. A helical membrane pass occupies residues 100-122 (VGISGIIIDVLTLSSTFLLACFL). Residues 123–131 (GQKVFGLDK) are Cytoplasmic-facing. The helical transmembrane segment at 132–151 (HTSWLIGAGSSICGAAAVLA) threads the bilayer. Over 152-162 (TEPVVKAEASK) the chain is Periplasmic. Residues 163–185 (VTVAVATVVIFGTVAIFLYPAIY) form a helical membrane-spanning segment. The Cytoplasmic segment spans residues 186-261 (PLMSQWFSPE…SGTNSGEKSK (76 aa)). Residues 262–283 (ITIPWFAILFIVVAIFNSFHLL) traverse the membrane as a helical segment. The Periplasmic portion of the chain corresponds to 284-289 (PQSVVN). The chain crosses the membrane as a helical span at residues 290 to 312 (MLVTLDTFLLAMAMAALGLTTHV). At 313-321 (SALKKAGAK) the chain is on the cytoplasmic side. A helical transmembrane segment spans residues 322 to 344 (PLLMALVLFAWLIVGGGAINYVI). Over 345 to 349 (QSVIA) the chain is Periplasmic.

Belongs to the UPF0324 family.

It is found in the cell inner membrane. The polypeptide is UPF0324 inner membrane protein YeiH (yeiH) (Escherichia coli O6:H1 (strain CFT073 / ATCC 700928 / UPEC)).